Here is a 453-residue protein sequence, read N- to C-terminus: UDP-glycosyltransferase 79B6 (453 aa).

UDP-alpha-D-glucose is bound by residues Ser266, 325–327 (VQQ), 342–350 (HCGFGSMWE), and 364–367 (LGEQ).

The protein belongs to the UDP-glycosyltransferase family.

The chain is UDP-glycosyltransferase 79B6 (UGT79B6) from Arabidopsis thaliana (Mouse-ear cress).